Reading from the N-terminus, the 225-residue chain is Ribonuclease 3 (225 aa).

In terms of domain architecture, RNase III spans 7–129 (LPRLGRILGY…IIGAIYLDAD (123 aa)). Glutamate 42 is a binding site for Mg(2+). The active site involves aspartate 46. Residues aspartate 115 and glutamate 118 each coordinate Mg(2+). The active site involves glutamate 118. Positions 155 to 225 (DPKTLLQEHL…AAEVLERIKK (71 aa)) constitute a DRBM domain.

Belongs to the ribonuclease III family. In terms of assembly, homodimer. Mg(2+) serves as cofactor.

Its subcellular location is the cytoplasm. It catalyses the reaction Endonucleolytic cleavage to 5'-phosphomonoester.. In terms of biological role, digests double-stranded RNA. Involved in the processing of primary rRNA transcript to yield the immediate precursors to the large and small rRNAs (23S and 16S). Processes some mRNAs, and tRNAs when they are encoded in the rRNA operon. Processes pre-crRNA and tracrRNA of type II CRISPR loci if present in the organism. This chain is Ribonuclease 3, found in Shewanella loihica (strain ATCC BAA-1088 / PV-4).